The sequence spans 1773 residues: Plexin-2 (1773 aa).

The signal sequence occupies residues 1-19 (MLFIESAFLVLTSLSAAEA). The Sema domain maps to 20–436 (ATPFEGGVKQ…MPYGIVMEEL (417 aa)). Residues 20 to 1130 (ATPFEGGVKQ…SDHALPSRLS (1111 aa)) lie on the Extracellular side of the membrane. Asn65 is a glycosylation site (N-linked (GlcNAc...) asparagine). 9 cysteine pairs are disulfide-bonded: Cys83–Cys90, Cys117–Cys125, Cys239–Cys341, Cys255–Cys292, Cys310–Cys328, Cys439–Cys456, Cys445–Cys479, Cys448–Cys465, and Cys459–Cys471. Residue Asn241 is glycosylated (N-linked (GlcNAc...) asparagine). The 43-residue stretch at 438–480 (TCAHHESCTDCQVSVDPLCQWCHPTQSCTTSSRCSGPLTTQCP) folds into the PSI 1 domain. An N-linked (GlcNAc...) asparagine glycan is attached at Asn494. Cys516 and Cys538 are joined by a disulfide. N-linked (GlcNAc...) asparagine glycosylation is present at Asn566. Positions 571-608 (DCAGYSTCSTCMSSEFGCQWCSHKCSSSCGSASAKACV) constitute a PSI 2 domain. N-linked (GlcNAc...) asparagine glycosylation is found at Asn670 and Asn693. The region spanning 698-739 (SCSNLAADCSSCLALSPSLSCGWCNRKCSHECHESKATAVCD) is the PSI 3 domain. IPT/TIG domains follow at residues 741 to 829 (PKID…FSFV), 831 to 916 (VSIF…FEYR), and 919 to 1006 (PSVN…FLMD). N-linked (GlcNAc...) asparagine glycosylation is found at Asn855, Asn877, Asn975, and Asn1007. Residues 1131 to 1151 (FLILGLLLFTVITLIVMCLIF) form a helical membrane-spanning segment. Residues 1150 to 1188 (IFKRRRQEREKEYRKIQLQMENLENNVRKECKQAFAELQ) adopt a coiled-coil conformation. The Cytoplasmic segment spans residues 1152-1764 (KRRRQEREKE…LHVCLETDNH (613 aa)).

The protein belongs to the plexin family. Interacts with mab-20.

The protein localises to the cell membrane. Involved as a receptor for mab-20/sema-2a in the formation or stabilization of cell-cell contacts at several stages of epithelial morphogenesis. In early embryonic development, required for proper ventral closure of the epidermis. During male tail morphogenesis, involved in precursor cell sorting and in the formation of distinct sensory rays. Involved in axon guidance of SDQL neurons during neurogenesis. This chain is Plexin-2 (plx-2), found in Caenorhabditis briggsae.